Reading from the N-terminus, the 286-residue chain is Bifunctional protein FolD (286 aa).

Residues 165–167 and Ser-190 each bind NADP(+); that span reads GRS.

It belongs to the tetrahydrofolate dehydrogenase/cyclohydrolase family. In terms of assembly, homodimer.

It carries out the reaction (6R)-5,10-methylene-5,6,7,8-tetrahydrofolate + NADP(+) = (6R)-5,10-methenyltetrahydrofolate + NADPH. It catalyses the reaction (6R)-5,10-methenyltetrahydrofolate + H2O = (6R)-10-formyltetrahydrofolate + H(+). It functions in the pathway one-carbon metabolism; tetrahydrofolate interconversion. Catalyzes the oxidation of 5,10-methylenetetrahydrofolate to 5,10-methenyltetrahydrofolate and then the hydrolysis of 5,10-methenyltetrahydrofolate to 10-formyltetrahydrofolate. The polypeptide is Bifunctional protein FolD (Staphylococcus aureus (strain USA300)).